The chain runs to 225 residues: NVWRFPYLCQKNGGGAYLVPYLVLLIIIGIPLFFLELAVGQRIRRGSIGVWHYVCPRLGGIGFSSCIVCLFVGLYYNVIIGWSIFYFFKSFQYPLPWSECPVSRNGTVAVVEAECEKSSATTYFWYREALDISNSISESGGLNWKMTLCLLVAWRIVGMAVVKGIQSSGKVMYFSSLFPYVVLACFLVRGLLLRGAIDGILHMFTPKLDKMLDPQVWRDAATQIF.

Transmembrane regions (helical) follow at residues 1–8 (NVWRFPYL), 16–35 (AYLVPYLVLLIIIGIPLFFL), and 60–80 (GIGFSSCIVCLFVGLYYNVII). At 81 to 143 (GWSIFYFFKS…NSISESGGLN (63 aa)) the chain is on the extracellular side. N-linked (GlcNAc...) asparagine glycosylation is present at asparagine 105. Helical transmembrane passes span 144-162 (WKMTLCLLVAWRIVGMAVV), 171-188 (VMYFSSLFPYVVLACFLV), and 224-225 (IF).

This sequence belongs to the sodium:neurotransmitter symporter (SNF) (TC 2.A.22) family.

Its subcellular location is the cytoplasmic vesicle. It is found in the secretory vesicle. The protein resides in the synaptic vesicle membrane. It localises to the postsynapse. The protein localises to the presynapse. It carries out the reaction L-proline(in) + Na(+)(in) = L-proline(out) + Na(+)(out). The enzyme catalyses L-leucine(in) + Na(+)(in) = L-leucine(out) + Na(+)(out). The catalysed reaction is glycine(in) + Na(+)(in) = glycine(out) + Na(+)(out). It catalyses the reaction L-alanine(in) + Na(+)(in) = L-alanine(out) + Na(+)(out). It carries out the reaction L-glutamine(in) + Na(+)(in) = L-glutamine(out) + Na(+)(out). In terms of biological role, synaptic vesicle transporter with apparent selectivity for neutral amino acids. The transport is sodium-coupled but chloride-independent, likely driven by the proton electrochemical gradient generated by vacuolar H(+)-ATPase in an overall electrogenic mechanism. May contribute to the synaptic uptake of neurotransmitter precursors in a process coupled in part to vesicle exocytosis. In Bos taurus (Bovine), this protein is Sodium-dependent neutral amino acid transporter SLC6A17.